We begin with the raw amino-acid sequence, 269 residues long: C-type lectin domain family 2 member G (269 aa).

The Cytoplasmic segment spans residues 1-107 (MNITRASLPM…SPESSAKLYC (107 aa)). A helical; Signal-anchor for type II membrane protein membrane pass occupies residues 108–128 (CCGVIMVLTVAVVALSVALPA). At 129–269 (TKTEQILINK…SLHCPTPVPV (141 aa)) the chain is on the extracellular side. The C-type lectin domain maps to 150–254 (VGNKCFYFSE…HYIPRIWICS (105 aa)). N-linked (GlcNAc...) asparagine glycosylation is present at Asn-163. An intrachain disulfide couples Cys-171 to Cys-253.

Detected in vagina, eye, tongue, stomach and spleen.

It localises to the cell membrane. In terms of biological role, inhibits osteoclast formation. The chain is C-type lectin domain family 2 member G (Clec2g) from Mus musculus (Mouse).